Consider the following 299-residue polypeptide: Virginiamycin B lyase (299 aa).

His-229 contacts substrate. Glu-269 is a Mg(2+) binding site. His-271 serves as the catalytic Proton acceptor. Glu-286 contacts Mg(2+).

This sequence belongs to the Vgb family. As to quaternary structure, monomer. Mg(2+) serves as cofactor.

Inactivates the type B streptogramin antibiotics by linearizing the lactone ring at the ester linkage, generating a free phenylglycine carboxylate and converting the threonyl moiety into 2-amino-butenoic acid. This chain is Virginiamycin B lyase, found in Bordetella parapertussis (strain 12822 / ATCC BAA-587 / NCTC 13253).